Here is a 411-residue protein sequence, read N- to C-terminus: Lissencephaly-1 homolog (411 aa).

A LisH domain is found at Q9 to T41. Residues T56 to A83 adopt a coiled-coil conformation. 7 WD repeats span residues G106–K147, G148–K187, G191–T230, G233–E272, D275–T334, G337–T376, and A379–R411.

It belongs to the WD repeat LIS1/nudF family.

The protein localises to the cytoplasm. Its subcellular location is the cytoskeleton. It is found in the microtubule organizing center. It localises to the centrosome. In terms of biological role, positively regulates the activity of the minus-end directed microtubule motor protein dynein. May enhance dynein-mediated microtubule sliding by targeting dynein to the microtubule plus end. Required for several dynein- and microtubule-dependent processes. The chain is Lissencephaly-1 homolog from Drosophila yakuba (Fruit fly).